The following is a 428-amino-acid chain: Glutamine synthetase, chloroplastic (428 aa).

Residues 1 to 48 (MAQAVVPAMQCQVGAVRARPAAAAAAAGGRVWGVRRTGRGTSGFRVMA) constitute a chloroplast transit peptide. The region spanning 75 to 155 (IIAEYIWVGG…VMCDTYTPAG (81 aa)) is the GS beta-grasp domain. The interval 95 to 120 (TISKPVEDPSELPKWNYDGSSTGQAP) is disordered. Residues 159-428 (PTNKRNRAAQ…LAAKKLALKV (270 aa)) enclose the GS catalytic domain.

This sequence belongs to the glutamine synthetase family. In terms of assembly, homooctamer.

The protein localises to the plastid. The protein resides in the chloroplast. The catalysed reaction is L-glutamate + NH4(+) + ATP = L-glutamine + ADP + phosphate + H(+). Light-modulated chloroplastic glutamine synthetase, encoded by a nuclear gene and expressed primarily in leaves, and which is responsible for the reassimilation of the ammonia generated by photorespiration. This Oryza sativa subsp. japonica (Rice) protein is Glutamine synthetase, chloroplastic.